The sequence spans 282 residues: 4-diphosphocytidyl-2-C-methyl-D-erythritol kinase (282 aa).

Residue K9 is part of the active site. Position 98–108 (98–108) interacts with ATP; it reads PMGGGLGGGSS. Residue D140 is part of the active site.

It belongs to the GHMP kinase family. IspE subfamily. In terms of assembly, homodimer.

The catalysed reaction is 4-CDP-2-C-methyl-D-erythritol + ATP = 4-CDP-2-C-methyl-D-erythritol 2-phosphate + ADP + H(+). It participates in isoprenoid biosynthesis; isopentenyl diphosphate biosynthesis via DXP pathway; isopentenyl diphosphate from 1-deoxy-D-xylulose 5-phosphate: step 3/6. Functionally, catalyzes the phosphorylation of the position 2 hydroxy group of 4-diphosphocytidyl-2C-methyl-D-erythritol. The sequence is that of 4-diphosphocytidyl-2-C-methyl-D-erythritol kinase from Salmonella paratyphi A (strain ATCC 9150 / SARB42).